We begin with the raw amino-acid sequence, 216 residues long: Probable GTP-binding protein EngB (216 aa).

Residues glutamate 23–leucine 197 form the EngB-type G domain. GTP is bound by residues glycine 31 to serine 38, glycine 58 to leucine 62, aspartate 76 to glycine 79, threonine 143 to aspartate 146, and phenylalanine 176 to serine 178. 2 residues coordinate Mg(2+): serine 38 and threonine 60.

This sequence belongs to the TRAFAC class TrmE-Era-EngA-EngB-Septin-like GTPase superfamily. EngB GTPase family. Requires Mg(2+) as cofactor.

Necessary for normal cell division and for the maintenance of normal septation. The sequence is that of Probable GTP-binding protein EngB from Aromatoleum aromaticum (strain DSM 19018 / LMG 30748 / EbN1) (Azoarcus sp. (strain EbN1)).